The primary structure comprises 159 residues: Nudix hydrolase DR_1025 (159 aa).

Residues Met-1, Arg-14, and Ser-49 each contribute to the Mg(2+) site. Residue 1-6 (MEHDER) coordinates ATP. Positions 11–144 (VELRAAGVVL…QIRMYQTKLF (134 aa)) constitute a Nudix hydrolase domain. 50–51 (GA) is an ATP binding site. The short motif at 50–71 (GAVEDGENPQDAAVREACEETG) is the Nudix box element. Mg(2+) is bound by residues Glu-53 and Glu-65. An ATP-binding site is contributed by 87-89 (FPD). Residue Arg-95 participates in Mg(2+) binding.

Belongs to the Nudix hydrolase family. As to quaternary structure, homodimer. The cofactor is Mg(2+).

The catalysed reaction is 8-oxo-dGTP + H2O = 8-oxo-dGDP + phosphate + H(+). It carries out the reaction 8-oxo-GTP + H2O = 8-oxo-GDP + phosphate + H(+). It catalyses the reaction P(1),P(4)-bis(5'-adenosyl) tetraphosphate + H2O = AMP + ATP + 2 H(+). Its function is as follows. Hydrolase that can act as a nucleoside triphosphatase and a dinucleoside polyphosphate pyrophosphatase. The best substrates are 8-oxo-dGTP and 8-oxo-GTP. Other substrates include Ap4A, dGTP and GTP. May be involved in protection from damage caused by radiation. In Deinococcus radiodurans (strain ATCC 13939 / DSM 20539 / JCM 16871 / CCUG 27074 / LMG 4051 / NBRC 15346 / NCIMB 9279 / VKM B-1422 / R1), this protein is Nudix hydrolase DR_1025.